We begin with the raw amino-acid sequence, 765 residues long: Transcription factor SKN7 (765 aa).

The disordered stretch occupies residues 1–42 (MPPTNGEGGSQQPQQQQQQQQQQQQQQQQQQQQQQGGSGSSD). A compositionally biased stretch (low complexity) spans 11–35 (QQPQQQQQQQQQQQQQQQQQQQQQQ). A DNA-binding domain region spans residues 40 to 145 (SSDFVRKLYK…NLDNIRRKAP (106 aa)). A coiled-coil region spans residues 157–198 (FNASQQQIAALSESLQATQQQLQALQQQCYELEKTNRLLVSE). The hydrophobic repeat HR-A/B stretch occupies residues 160–220 (SQQQIAALSE…QASNEIINHL (61 aa)). The segment at 371 to 391 (SSSQITPSQITPPPKDQMSSM) is disordered. Positions 398 to 514 (RVLLVEDDKT…NMSRLLRRHL (117 aa)) constitute a Response regulatory domain. D449 carries the 4-aspartylphosphate modification. The transactivation domain stretch occupies residues 542–765 (TAGPATTGVG…PGVGVAGFVQ (224 aa)). A compositionally biased stretch (gly residues) spans 550-564 (VGVGVAGAPSGGAHG). 2 disordered regions span residues 550 to 647 (VGVG…PAGL) and 686 to 765 (PGAM…GFVQ). The span at 569 to 584 (AQHQQGYAMAPPTTMQ) shows a compositional bias: low complexity. Over residues 626–636 (QPPPPPTPTQP) the composition is skewed to pro residues. 2 stretches are compositionally biased toward low complexity: residues 637-647 (SPTSAAPPAGL) and 699-715 (GVGH…AGAR). Positions 755-765 (HPGVGVAGFVQ) are enriched in gly residues.

It belongs to the SKN7 family. Homotrimer.

The protein resides in the nucleus. Transcription factor that is part of a SLN1-YPD1-SKN7 two-component regulatory system, which controls gene expression in response to changes in the osmolarity of the extracellular environment. Under low osmotic conditions, phosphorylated and activated by the phosphorelay intermediate protein YPD1. Also activated in response to oxidative stress, independent on the two-component regulatory system. Regulates heat shock genes in response to oxidative stress and genes involved in cell wall integrity in response to osmotic changes. The sequence is that of Transcription factor SKN7 from Chaetomium thermophilum (strain DSM 1495 / CBS 144.50 / IMI 039719) (Thermochaetoides thermophila).